We begin with the raw amino-acid sequence, 700 residues long: Elongation factor G (700 aa).

Residues 8 to 290 (ERYRNIGISA…AVVEYLPSPV (283 aa)) enclose the tr-type G domain. Residues 17–24 (AHIDAGKT), 88–92 (DTPGH), and 142–145 (NKMD) contribute to the GTP site.

This sequence belongs to the TRAFAC class translation factor GTPase superfamily. Classic translation factor GTPase family. EF-G/EF-2 subfamily.

The protein localises to the cytoplasm. Catalyzes the GTP-dependent ribosomal translocation step during translation elongation. During this step, the ribosome changes from the pre-translocational (PRE) to the post-translocational (POST) state as the newly formed A-site-bound peptidyl-tRNA and P-site-bound deacylated tRNA move to the P and E sites, respectively. Catalyzes the coordinated movement of the two tRNA molecules, the mRNA and conformational changes in the ribosome. This Mannheimia succiniciproducens (strain KCTC 0769BP / MBEL55E) protein is Elongation factor G.